Reading from the N-terminus, the 907-residue chain is Valine--tRNA ligase (907 aa).

The 'HIGH' region signature appears at 45-55; that stretch reads PNVTGSLHMGH. The short motif at 554–558 is the 'KMSKS' region element; sequence KMSKS. An ATP-binding site is contributed by lysine 557. Residues 838–870 adopt a coiled-coil conformation; that stretch reads GQLIDLEAERARLMKDVSKIEQDIEKLSAKLSN.

Belongs to the class-I aminoacyl-tRNA synthetase family. ValS type 1 subfamily. Monomer.

It localises to the cytoplasm. The catalysed reaction is tRNA(Val) + L-valine + ATP = L-valyl-tRNA(Val) + AMP + diphosphate. Its function is as follows. Catalyzes the attachment of valine to tRNA(Val). As ValRS can inadvertently accommodate and process structurally similar amino acids such as threonine, to avoid such errors, it has a 'posttransfer' editing activity that hydrolyzes mischarged Thr-tRNA(Val) in a tRNA-dependent manner. This Bartonella henselae (strain ATCC 49882 / DSM 28221 / CCUG 30454 / Houston 1) (Rochalimaea henselae) protein is Valine--tRNA ligase.